Consider the following 326-residue polypeptide: Siroheme decarboxylase NirDL subunit (326 aa).

This sequence belongs to the Ahb/Nir family. Forms a complex composed of NirDL, NirG and NirH. All proteins are required for the total conversion of siroheme to didecarboxysiroheme.

The catalysed reaction is siroheme + 2 H(+) = 12,18-didecarboxysiroheme + 2 CO2. Its pathway is porphyrin-containing compound metabolism. Its function is as follows. Involved in heme d1 biosynthesis. Catalyzes the decarboxylation of siroheme into didecarboxysiroheme. Siroheme is probably decarboxylated to monodecarboxysiroheme, which is in turn decarboxylated to didecarboxysiroheme. This chain is Siroheme decarboxylase NirDL subunit, found in Paracoccus pantotrophus (Thiosphaera pantotropha).